The primary structure comprises 217 residues: Proteasome subunit beta type-9 (217 aa).

A propeptide spans 1–18 (MLGEEAEPQWISEEVKTG) (removed in mature form). Catalysis depends on T19, which acts as the Nucleophile.

Belongs to the peptidase T1B family. As to quaternary structure, the 26S proteasome consists of a 20S proteasome core and two 19S regulatory subunits. The 20S proteasome core is composed of 28 subunits that are arranged in four stacked rings, resulting in a barrel-shaped structure. The two end rings are each formed by seven alpha subunits, and the two central rings are each formed by seven beta subunits. The catalytic chamber with the active sites is on the inside of the barrel. Component of the immunoproteasome, where it displaces the equivalent housekeeping subunit PSMB6. Post-translationally, autocleaved. The resulting N-terminal Thr residue of the mature subunit is responsible for the nucleophile proteolytic activity.

The protein localises to the cytoplasm. The protein resides in the nucleus. The enzyme catalyses Cleavage of peptide bonds with very broad specificity.. Functionally, the proteasome is a multicatalytic proteinase complex which is characterized by its ability to cleave peptides with Arg, Phe, Tyr, Leu, and Glu adjacent to the leaving group at neutral or slightly basic pH. The proteasome has an ATP-dependent proteolytic activity. This subunit is involved in antigen processing to generate class I binding peptides. This chain is Proteasome subunit beta type-9 (psmb9), found in Oryzias latipes (Japanese rice fish).